A 333-amino-acid chain; its full sequence is G-protein coupled receptor 146 (333 aa).

Residues 1–21 (MWSCEDLNYTNSGEEQYLCNE) are Extracellular-facing. N-linked (GlcNAc...) asparagine glycosylation is present at asparagine 8. A helical transmembrane segment spans residues 22–42 (FHLFLFIFSVLYLIICFPVGL). Topologically, residues 43–65 (CYNVQLVLVNLYNKATMTMPDVY) are cytoplasmic. A helical membrane pass occupies residues 66–86 (FVNMAIAGLIINAVAPVYLFG). Over 87-102 (PAYTKWSLWSFGNEVY) the chain is Extracellular. Residues 103-123 (ITLLILFNVSSLVIMYSTTLL) form a helical membrane-spanning segment. At 124-146 (SLDYYIECALPRTYMSSVYNTKH) the chain is on the cytoplasmic side. Residues 147–167 (VCGFIWGGAVLTSFSSLLFYI) traverse the membrane as a helical segment. At 168 to 189 (CNHVSTKIIECSKMQNREAADA) the chain is on the extracellular side. A helical membrane pass occupies residues 190-210 (IMVLIGYVVPIIAVIYALVLI). At 211–234 (LQIRKEATPLDQESGRLDPSVHRL) the chain is on the cytoplasmic side. Residues 235–255 (LIATVCTQFILWTPYYVTLLV) form a helical membrane-spanning segment. Topologically, residues 256–275 (NTFMDARVKSSNTFYIRIFQ) are extracellular. A helical membrane pass occupies residues 276–296 (FTEGLSNFLAFSSSFVLPLIH). Topologically, residues 297-333 (RHINKNFSGKLQRLLKRLHCGSQGCTHEHTVVQQVMT) are cytoplasmic.

Belongs to the G-protein coupled receptor 1 family.

The protein resides in the cell membrane. G-protein coupled receptor required for the regulation of plasma cholesterol levels. The protein is G-protein coupled receptor 146 (gpr146) of Xenopus laevis (African clawed frog).